The primary structure comprises 162 residues: Anaerobic nitrite reductase NSHB2 (162 aa).

The 144-residue stretch at 16 to 159 (SFSEEQEALV…LVAAIKQEMK (144 aa)) folds into the Globin domain. Positions 49–53 (EVAPS) match the Homodimerization motif. Heme b is bound by residues Ser59, Lys73, His77, Arg100, Thr104, and His105. A Homodimerization motif is present at residues 112 to 124 (DAHFEVTRFALLE).

The protein belongs to the plant globin family. In terms of assembly, homodimer. Requires heme b as cofactor. Mainly expressed in germinating seeds, seedlings, roots, flowers and leaves.

It localises to the cytoplasm. The protein localises to the nucleus. The enzyme catalyses Fe(III)-heme b-[protein] + nitric oxide + H2O = Fe(II)-heme b-[protein] + nitrite + 2 H(+). In terms of biological role, phytoglobin that reduces nitrite to nitric oxide under anoxic conditions (e.g. during flooding or in waterlogged soil). May not function as an oxygen storage or transport protein. Has an unusually high affinity for O(2) through an hexacoordinate heme iron because of a very low dissociation constant. Promotes tolerance to low potassium K(+) conditions. The sequence is that of Anaerobic nitrite reductase NSHB2 from Oryza sativa subsp. indica (Rice).